A 181-amino-acid chain; its full sequence is SRP-independent targeting protein 2 (181 aa).

Residues 1–15 are Cytoplasmic-facing; sequence MAGKAGRKQASSNAK. A helical membrane pass occupies residues 16–36; the sequence is IIQGLYKQVSLFLGMAIVRLF. Residues 37 to 45 are Lumenal-facing; it reads ISRKVTIGQ. Residues 46–66 traverse the membrane as a helical segment; it reads WIKLVALNVPMFVALYIIVLS. Residues 67 to 89 lie on the Cytoplasmic side of the membrane; sequence GKPKYDGNRVVKQGIDLNDNTNL. Residues 90 to 110 form a helical membrane-spanning segment; that stretch reads ISYFFDLIYLSLFGNIGIIAF. At 111–112 the chain is on the lumenal side; it reads RT. A helical membrane pass occupies residues 113 to 133; sequence FKFWWCLLLCPIYAGYKLYGL. At 134–181 the chain is on the cytoplasmic side; it reads KNMFMPGAQQTQADNRSKNANEGQSKSKRQMKRERRGETDSKIKYKYR. A compositionally biased stretch (polar residues) spans 144 to 157; sequence TQADNRSKNANEGQ. The segment at 144–181 is disordered; it reads TQADNRSKNANEGQSKSKRQMKRERRGETDSKIKYKYR. Positions 168–181 are enriched in basic and acidic residues; that stretch reads RRGETDSKIKYKYR.

It belongs to the TMEM208 family. In terms of assembly, interacts with SND1, PHO88/SND3 and the translocon complex subunit SEC61. ENV10/SND2 and PHO88/SND3 form a complex with the translocon in the endoplasmic reticulum membrane.

The protein localises to the endoplasmic reticulum membrane. Functions in the SND pathway, a SRP (signal recognition particle) and GET (guided entry of tail-anchored proteins) independent pathway for targeting a broad range of substrate proteins to the endoplasmic reticulum. SND functions in parallel to GET in targeting proteins with downstream hydrophobic motifs. Involved in vacuolar processing and morphology. This Saccharomyces cerevisiae (strain ATCC 204508 / S288c) (Baker's yeast) protein is SRP-independent targeting protein 2.